We begin with the raw amino-acid sequence, 1573 residues long: Mediator of RNA polymerase II transcription subunit 1 (1573 aa).

Positions 588–592 (LTSLL) match the LXXLL motif 1 motif. 3 disordered regions span residues 595–691 (TSNS…EDDF), 774–883 (SKLP…FKDF), and 928–1564 (LGGP…GDDD). Residues 606–617 (PTPPQHTPPPAS) show a composition bias toward pro residues. The LXXLL motif 2 motif lies at 629–633 (LMNLL). Residues 651-668 (ERQNSSGSPRTELGSSAS) show a composition bias toward polar residues. Over residues 678 to 691 (TGTEKMKNQTEDDF) the composition is skewed to basic and acidic residues. 3 stretches are compositionally biased toward polar residues: residues 791–804 (RDSS…STLF), 835–864 (GSPN…QSGF), and 934–944 (QETQSRSQSPL). Basic and acidic residues predominate over residues 949 to 961 (LGKDRPQKQKVKE). Residues 963-973 (GNGGGAGGGLS) show a composition bias toward gly residues. 5 stretches are compositionally biased toward low complexity: residues 1025–1038 (PTST…GTSG), 1053–1085 (KITI…SSSS), 1092–1116 (SSLS…MKIG), 1124–1143 (SGQS…SMGK), and 1155–1164 (SSNVNNSSGS). The span at 1176 to 1193 (MNPSLSKPNISPSHSRPS) shows a compositional bias: polar residues. Low complexity predominate over residues 1226–1277 (LSGSGSNSTTKSSSGLVSSGSLTQKPNSSSSSSSSSSSSSSSSSSSSSSFSS). Over residues 1278 to 1290 (GVSQNLHSSSKGK) the composition is skewed to polar residues. The segment covering 1350 to 1362 (PTKREKGEKDKSK) has biased composition (basic and acidic residues). Composition is skewed to polar residues over residues 1420–1435 (SQMQ…SGST) and 1443–1457 (PSHN…QALD). Positions 1461-1471 (ESGSSSIAEKS) are enriched in low complexity. Residues 1496–1505 (KHKKHKKEKK) show a composition bias toward basic residues. The segment covering 1506–1518 (RLKDKDRDREKKK) has biased composition (basic and acidic residues).

This sequence belongs to the Mediator complex subunit 1 family. In terms of assembly, component of the Mediator complex.

It is found in the nucleus. Functionally, component of the Mediator complex, a coactivator involved in the regulated transcription of nearly all RNA polymerase II-dependent genes. Mediator functions as a bridge to convey information from gene-specific regulatory proteins to the basal RNA polymerase II transcription machinery. Mediator is recruited to promoters by direct interactions with regulatory proteins and serves as a scaffold for the assembly of a functional preinitiation complex with RNA polymerase II and the general transcription factors. This chain is Mediator of RNA polymerase II transcription subunit 1 (med1), found in Xenopus tropicalis (Western clawed frog).